The sequence spans 227 residues: Orotate phosphoribosyltransferase (227 aa).

K26 contacts 5-phospho-alpha-D-ribose 1-diphosphate. 34-35 (FF) is a binding site for orotate. Residues 72–73 (YK), R98, K99, K102, H104, and 123–131 (DDVVSAGLS) contribute to the 5-phospho-alpha-D-ribose 1-diphosphate site. S127 and R155 together coordinate orotate.

This sequence belongs to the purine/pyrimidine phosphoribosyltransferase family. PyrE subfamily. Homodimer. Mg(2+) is required as a cofactor.

It carries out the reaction orotidine 5'-phosphate + diphosphate = orotate + 5-phospho-alpha-D-ribose 1-diphosphate. It functions in the pathway pyrimidine metabolism; UMP biosynthesis via de novo pathway; UMP from orotate: step 1/2. In terms of biological role, catalyzes the transfer of a ribosyl phosphate group from 5-phosphoribose 1-diphosphate to orotate, leading to the formation of orotidine monophosphate (OMP). In Nitrosomonas europaea (strain ATCC 19718 / CIP 103999 / KCTC 2705 / NBRC 14298), this protein is Orotate phosphoribosyltransferase.